The following is a 613-amino-acid chain: pH-response transcription factor pacC/RIM101 (613 aa).

The segment at M1–D61 is disordered. The span at Q11 to S60 shows a compositional bias: low complexity. 3 C2H2-type zinc fingers span residues L64–H89, L100–H124, and H130–H152. Residues K146 to V157 are compositionally biased toward basic and acidic residues. Disordered stretches follow at residues K146–T186, N371–G391, A406–E535, and E565–A613. Positions P417–S441 are enriched in low complexity. Polar residues-rich tracts occupy residues R442–A460 and S506–A517. A YPX[LI] motif 1 motif is present at residues Y451–L454. The YPX[LI] motif 2 motif lies at Y605–L608.

Belongs to the pacC/RIM101 family. In terms of assembly, binds to DNA. Activated by C-terminal proteolytic cleavage by signaling protease (probably palB/RIM13) at neutral to alkaline ambient pH.

It localises to the cytoplasm. The protein resides in the nucleus. In terms of biological role, transcription factor that mediates regulation of both acid- and alkaline-expressed genes in response to ambient pH. At alkaline ambient pH, activates transcription of alkaline-expressed genes (including PAC1 itself) and represses transcription of acid-expressed genes. The polypeptide is pH-response transcription factor pacC/RIM101 (PAC1) (Gibberella moniliformis (Maize ear and stalk rot fungus)).